The sequence spans 827 residues: Periplasmic nitrate reductase (827 aa).

Positions 1–32 (MNLSRRDFMKANAALAAASVAGLIIPVKNVNA) form a signal peptide, tat-type signal. The 4Fe-4S Mo/W bis-MGD-type domain maps to 37-93 (ITWDKAVCRFCGTGCAVLVGTKDGRVVASQGDPDAEVNRGLNCIKGYFLPKIMYGKD). Residues Cys-44, Cys-47, Cys-51, and Cys-79 each contribute to the [4Fe-4S] cluster site. Residues Lys-81, Gln-148, Asn-173, Cys-177, 210 to 217 (WGSNMAEM), 242 to 246 (STFEH), 261 to 263 (QSD), Met-372, Gln-376, Asn-482, 508 to 509 (SD), Lys-531, Asp-558, and 717 to 726 (TGRILEHWHT) contribute to the Mo-bis(molybdopterin guanine dinucleotide) site. A substrate-binding site is contributed by Phe-793. 2 residues coordinate Mo-bis(molybdopterin guanine dinucleotide): Asn-801 and Lys-818.

It belongs to the prokaryotic molybdopterin-containing oxidoreductase family. NasA/NapA/NarB subfamily. Component of the periplasmic nitrate reductase NapAB complex composed of NapA and NapB. [4Fe-4S] cluster serves as cofactor. Requires Mo-bis(molybdopterin guanine dinucleotide) as cofactor. Predicted to be exported by the Tat system. The position of the signal peptide cleavage has not been experimentally proven.

Its subcellular location is the periplasm. It carries out the reaction 2 Fe(II)-[cytochrome] + nitrate + 2 H(+) = 2 Fe(III)-[cytochrome] + nitrite + H2O. In terms of biological role, catalytic subunit of the periplasmic nitrate reductase complex NapAB. Receives electrons from NapB and catalyzes the reduction of nitrate to nitrite. This is Periplasmic nitrate reductase from Histophilus somni (strain 129Pt) (Haemophilus somnus).